The following is a 376-amino-acid chain: Chaperone protein DnaJ (376 aa).

The region spanning 5–69 (DYYEILGVDR…EKRARYDRFG (65 aa)) is the J domain. A CR-type zinc finger spans residues 135-217 (GLETDIRVPH…CNGKGVVRKT (83 aa)). The Zn(2+) site is built by cysteine 148, cysteine 151, cysteine 165, cysteine 168, cysteine 191, cysteine 194, cysteine 205, and cysteine 208. CXXCXGXG motif repeat units follow at residues 148–155 (CPVCHGSR), 165–172 (CQTCGGSG), 191–198 (CPDCQGEG), and 205–212 (CSNCNGKG).

It belongs to the DnaJ family. In terms of assembly, homodimer. Zn(2+) is required as a cofactor.

It localises to the cytoplasm. In terms of biological role, participates actively in the response to hyperosmotic and heat shock by preventing the aggregation of stress-denatured proteins and by disaggregating proteins, also in an autonomous, DnaK-independent fashion. Unfolded proteins bind initially to DnaJ; upon interaction with the DnaJ-bound protein, DnaK hydrolyzes its bound ATP, resulting in the formation of a stable complex. GrpE releases ADP from DnaK; ATP binding to DnaK triggers the release of the substrate protein, thus completing the reaction cycle. Several rounds of ATP-dependent interactions between DnaJ, DnaK and GrpE are required for fully efficient folding. Also involved, together with DnaK and GrpE, in the DNA replication of plasmids through activation of initiation proteins. In Methanothermobacter thermautotrophicus (strain ATCC 29096 / DSM 1053 / JCM 10044 / NBRC 100330 / Delta H) (Methanobacterium thermoautotrophicum), this protein is Chaperone protein DnaJ.